Consider the following 271-residue polypeptide: MNRIKQTFAALAEQGRKGLIPFITAGDPDPAKTVEFMHALAAGGADVIELGVPFSDPMADGPVIQRSSERALARGVTLKSVLADVKRFRETDPKTPVVLMGYANPIERMGVDAFAAEAHAAGVDGVLVVDYPPEEAGVFAEKMRAAQIDPIFLLAPTSTDERIADVGKIASGYVYYVSLKGVTGAGNLDVSSIAGKIPAIKSRVPVPVGVGFGIRDAETARAVAEVSDAVVIGSRLVQLLESAAPEGAAAALKTFIAELRAALDGAGNTAR.

Active-site proton acceptor residues include Glu49 and Asp60.

Belongs to the TrpA family. Tetramer of two alpha and two beta chains.

The enzyme catalyses (1S,2R)-1-C-(indol-3-yl)glycerol 3-phosphate + L-serine = D-glyceraldehyde 3-phosphate + L-tryptophan + H2O. Its pathway is amino-acid biosynthesis; L-tryptophan biosynthesis; L-tryptophan from chorismate: step 5/5. In terms of biological role, the alpha subunit is responsible for the aldol cleavage of indoleglycerol phosphate to indole and glyceraldehyde 3-phosphate. In Burkholderia cenocepacia (strain HI2424), this protein is Tryptophan synthase alpha chain.